A 988-amino-acid chain; its full sequence is Transcription regulator srbA precursor (988 aa).

At 1–427 (MSTPGIGGDF…SSWHARAISH (427 aa)) the chain is on the cytoplasmic side. Disordered regions lie at residues 53-85 (AFPE…SDAM) and 108-169 (GDLN…KKRA). Low complexity predominate over residues 125-136 (SLSVHSNSPLSS). Positions 165-178 (SKKRAHNVIEKRYR) are basic motif. A bHLH domain is found at 165-236 (SKKRAHNVIE…SKATEYIRHL (72 aa)). The interval 179–236 (ANLNEKIAELRDSVPSLRASYKQANGNSGDDDDDGVTSASKLNKASILSKATEYIRHL) is helix-loop-helix motif. Positions 226 to 260 (LSKATEYIRHLEIRNKRLEEENTALKIRLRQLDKA) form a coiled coil. A compositionally biased stretch (polar residues) spans 267 to 291 (SAASVSSPSDCTVSTESGASSSPSV). The interval 267 to 313 (SAASVSSPSDCTVSTESGASSSPSVFSHAEDVPSDHSPTSSHPPEGL) is disordered. The span at 301-310 (DHSPTSSHPP) shows a compositional bias: low complexity. A helical membrane pass occupies residues 428–447 (FLMLAILVVGSAFIVFVYLF). The Lumenal segment spans residues 448–988 (NSDPRRQYSA…SDNLLLSDES (541 aa)). A compositionally biased stretch (low complexity) spans 866 to 881 (PPSPMSKASDMLSSSS). A disordered region spans residues 866–900 (PPSPMSKASDMLSSSSDDGEDGASQRNNNIIPHPM).

In low oxygen or sterol conditions, undergoes proteolytic cleavage by rhomboid-type protease rbdB and is released as soluble transcription factor from the membrane.

It is found in the endoplasmic reticulum membrane. The protein localises to the nucleus. In terms of biological role, precursor of the transcription factor srbA, which is embedded in the endoplasmic reticulum membrane. Low oxygen or sterol conditions promote processing of this form, releasing the transcription factor form that translocates into the nucleus and activates transcription of genes required for adaptation to anaerobic growth. Transcription factor that regulates sterol biosynthesis and hyphal morphology. Plays a critical role in ergosterol biosynthesis, resistance to the azole class of antifungal drugs, and in maintenance of cell polarity. Directly binds erg11A/cyp51A upstream DNA sequence at tandem repeats, called TR34 and TR46, that produce duplicated binding sites. Also mediates regulation of iron acquisition in response to hypoxia and low iron conditions via activation of extra- and intracellular siderophore production. Positively regulates the expression of the other hypoxia adaptation key transcription factor srbB. Required for the azole-sensing and response to azole stress. Binds the high-affinity sites 5'-A-T-C-G/A-T/G-A/G-C/T-G/C-A-T-3' of target promoters. Required for virulence in murine models of invasive pulmonary aspergillosis (IPA). This is Transcription regulator srbA precursor from Aspergillus fumigatus (strain ATCC MYA-4609 / CBS 101355 / FGSC A1100 / Af293) (Neosartorya fumigata).